The primary structure comprises 150 residues: Histone H2B.2 (150 aa).

The segment covering 1–16 has biased composition (basic and acidic residues); that stretch reads MAPKAEKKPAAKKPAE. The tract at residues 1–57 is disordered; that stretch reads MAPKAEKKPAAKKPAEEEPAAEKAPAGKKPKAEKRVPAGKSAGKEGGEGKRGRKKGK. N6-acetyllysine occurs at positions 7 and 34. Lysine 146 participates in a covalent cross-link: Glycyl lysine isopeptide (Lys-Gly) (interchain with G-Cter in ubiquitin).

The protein belongs to the histone H2B family. As to quaternary structure, the nucleosome is a histone octamer containing two molecules each of H2A, H2B, H3 and H4 assembled in one H3-H4 heterotetramer and two H2A-H2B heterodimers. The octamer wraps approximately 147 bp of DNA. In terms of processing, can be acetylated to form H2BK6ac and H2BK33ac. Post-translationally, monoubiquitinated to form H2BK143ub1; may give a specific tag for epigenetic transcriptional activation.

Its subcellular location is the nucleus. The protein resides in the chromosome. In terms of biological role, core component of nucleosome. Nucleosomes wrap and compact DNA into chromatin, limiting DNA accessibility to the cellular machineries which require DNA as a template. Histones thereby play a central role in transcription regulation, DNA repair, DNA replication and chromosomal stability. DNA accessibility is regulated via a complex set of post-translational modifications of histones, also called histone code, and nucleosome remodeling. In Zea mays (Maize), this protein is Histone H2B.2.